The following is a 490-amino-acid chain: Costunolide synthase (490 aa).

The helical; Signal-anchor for type II membrane protein transmembrane segment at 3 to 23 (PLTIVSLAVASFLLFAFWALS) threads the bilayer. Residues asparagine 167 and asparagine 255 are each glycosylated (N-linked (GlcNAc...) asparagine). A heme-binding site is contributed by cysteine 432.

The protein belongs to the cytochrome P450 family. Heme serves as cofactor.

The protein resides in the membrane. It carries out the reaction germacra-1(10),4,11(13)-trien-12-oate + reduced [NADPH--hemoprotein reductase] + O2 = (+)-costunolide + oxidized [NADPH--hemoprotein reductase] + 2 H2O. The protein operates within secondary metabolite biosynthesis; terpenoid biosynthesis. In terms of biological role, involved in the biosynthesis of germacrene-derived sesquiterpene lactones. Component of the parthenolide biosynthetic pathway; parthenolide and conjugates are promising anti-cancer drugs highly active against colon cancer cells. Hydroxylates germacrene A acid to 6-alpha-hydroxy-germacrne A acid, a precursor of sesquiterpene lactones that spontaneously undergoes a lactonization which yields costunolide. The polypeptide is Costunolide synthase (Lactuca sativa (Garden lettuce)).